A 311-amino-acid chain; its full sequence is MHPAPDMSLWQGRIDSQEGAGALRWHQWIRPYHESAGAASVLLGFASDEGVRRNQGRQGARQGPPALRRALANLAWHGEQALYDAGDIEAAEDLEGAQERYARRVAELLGRGHQVVGLGGGHEIAYASFSGLAHHLGRDGGTPRIGILNFDAHFDLRHAEQASSGTPFRQIAEHCEASGWPFAYCCLGVSRLSNTAALFDQAQRLGVRYLLDRQVQPWNLERSEAFLDSFLQSIEHLYLTVCLDVLPAAQAPGVSAPSAHGVEMSLVEHLVRRAKASGKLRLADIAELNPQFDNDQRTARIAARLVDALVN.

Mn(2+) is bound by residues His-122, Asp-151, His-153, Asp-155, Cys-242, and Asp-244.

Belongs to the arginase family. It depends on Mn(2+) as a cofactor.

The enzyme catalyses N-formimidoyl-L-glutamate + H2O = formamide + L-glutamate. It participates in amino-acid degradation; L-histidine degradation into L-glutamate; L-glutamate from N-formimidoyl-L-glutamate (hydrolase route): step 1/1. Functionally, catalyzes the conversion of N-formimidoyl-L-glutamate to L-glutamate and formamide. The chain is Formimidoylglutamase from Pseudomonas paraeruginosa (strain DSM 24068 / PA7) (Pseudomonas aeruginosa (strain PA7)).